A 295-amino-acid chain; its full sequence is Small ribosomal subunit protein uS2 (295 aa).

Residue S2 is modified to N-acetylserine. S43 carries the post-translational modification Phosphoserine. At K52 the chain carries N6-acetyllysine. Positions 54 to 113 (TWEKLLLAARAIVAIENPADVSVISSRNTGQRAVLKFAAATGATPIAGRFTPGTFTNQIQ) are interaction with PPP1R16B. N6-acetyllysine; alternate is present on K89. K89 participates in a covalent cross-link: Glycyl lysine isopeptide (Lys-Gly) (interchain with G-Cter in SUMO2); alternate. At T97 the chain carries Phosphothreonine. Laminin-binding stretches follow at residues 161–180 (IPCNNKGAHSVGLMWWMLAR) and 205–229 (RDPEEIEKEEQAAAEKAVTKEEFQG). 5 [DE]-W-[ST] repeats span residues 230-232 (EWT), 247-249 (DWS), 266-268 (DWS), 275-277 (DWS), and 293-295 (EWS). A laminin-binding region spans residues 242-295 (QPEVADWSEGVQVPSVPIQQFPTEDWSAQPATEDWSAAPTAQATEWVGATTEWS). A disordered region spans residues 266-295 (DWSAQPATEDWSAAPTAQATEWVGATTEWS).

Belongs to the universal ribosomal protein uS2 family. As to quaternary structure, monomer (37LRP) and homodimer (67LR). Component of the small ribosomal subunit. Mature ribosomes consist of a small (40S) and a large (60S) subunit. The 40S subunit contains about 33 different proteins and 1 molecule of RNA (18S). The 60S subunit contains about 49 different proteins and 3 molecules of RNA (28S, 5.8S and 5S). Interacts with RPS21. Interacts with several laminins including at least LAMB1. Interacts with MDK. Interacts with PRNP. The mature dimeric form interacts with PPP1R16B (via its fourth ankyrin repeat). Interacts with PPP1CA only in the presence of PPP1R16B. In terms of processing, acylated. Acylation may be a prerequisite for conversion of the monomeric 37 kDa laminin receptor precursor (37LRP) to the mature dimeric 67 kDa laminin receptor (67LR), and may provide a mechanism for membrane association. Post-translationally, cleaved by stromelysin-3 (ST3) at the cell surface. Cleavage by stromelysin-3 may be a mechanism to alter cell-extracellular matrix interactions.

The protein localises to the cell membrane. Its subcellular location is the cytoplasm. The protein resides in the nucleus. Required for the assembly and/or stability of the 40S ribosomal subunit. Required for the processing of the 20S rRNA-precursor to mature 18S rRNA in a late step of the maturation of 40S ribosomal subunits. Also functions as a cell surface receptor for laminin. Plays a role in cell adhesion to the basement membrane and in the consequent activation of signaling transduction pathways. May play a role in cell fate determination and tissue morphogenesis. Also acts as a receptor for several other ligands, including the pathogenic prion protein, viruses, and bacteria. Acts as a PPP1R16B-dependent substrate of PPP1CA. Enables malignant tumor cells to penetrate laminin tissue and vessel barriers. Activates precursor thymic anti-OFA/iLRP specific cytotoxic T-cell. May induce CD8 T-suppressor cells secreting IL-10. The protein is Small ribosomal subunit protein uS2 (Rpsa) of Mus musculus (Mouse).